The primary structure comprises 624 residues: Alpha-mannosidase I MNS4 (624 aa).

Topologically, residues 1–7 (MDSNFKW) are cytoplasmic. A helical; Signal-anchor for type II membrane protein membrane pass occupies residues 8 to 28 (LLFAILISLTFSGFVLHHGVL). Residues 29–624 (AESVKPDEAK…ETDDQRSYSS (596 aa)) lie on the Lumenal side of the membrane. Asn-115 carries N-linked (GlcNAc...) asparagine glycosylation. Glu-122 serves as the catalytic Proton donor. Asp-262 is an active-site residue. Catalysis depends on Glu-355, which acts as the Proton donor. Glu-376 is an active-site residue. Residue Thr-466 coordinates Ca(2+). N-linked (GlcNAc...) asparagine glycosylation occurs at Asn-494. The interval 574–624 (QTVEKRPQEEEGFTSQSEPIMTISGGSSNDQTGQELTLLESETDDQRSYSS) is disordered. Polar residues predominate over residues 586-608 (FTSQSEPIMTISGGSSNDQTGQE).

The protein belongs to the glycosyl hydrolase 47 family. Ca(2+) serves as cofactor.

The protein resides in the endoplasmic reticulum membrane. It participates in protein modification; protein glycosylation. Its function is as follows. Can convert Man(9)GlcNAc(2) and Man(8)GlcNAc(2) into N-glycans with a terminal alpha-1,6-linked Man residue in the C-branch. Functions in the formation of unique N-glycan structures that are specifically recognized by components of the endoplasmic reticulum-associated degradation (ERAD) machinery, which leads to the degradation of misfolded glycoproteins. Most likely generates N-glycan signal on misfolded glycoproteins that is subsequently recognized by OS9. Required for ERAD of the heavily glycosylated and misfolded BRI1 variants BRI1-5 and BRI1-9. Does not seem to play role in N-glycan processing of correctly folded proteins destined for secretion. The sequence is that of Alpha-mannosidase I MNS4 (MNS4) from Arabidopsis thaliana (Mouse-ear cress).